We begin with the raw amino-acid sequence, 525 residues long: Glutamate--cysteine ligase (525 aa).

Belongs to the glutamate--cysteine ligase type 1 family. Type 1 subfamily.

It carries out the reaction L-cysteine + L-glutamate + ATP = gamma-L-glutamyl-L-cysteine + ADP + phosphate + H(+). It participates in sulfur metabolism; glutathione biosynthesis; glutathione from L-cysteine and L-glutamate: step 1/2. This is Glutamate--cysteine ligase from Pseudomonas putida (strain ATCC 47054 / DSM 6125 / CFBP 8728 / NCIMB 11950 / KT2440).